Reading from the N-terminus, the 651-residue chain is Mitogen-activated protein kinase kinase kinase 3 (651 aa).

Residues 68–330 (WRKGELIGCG…ATELLQHPFV (263 aa)) enclose the Protein kinase domain. ATP-binding positions include 74–82 (IGCGAFGRV) and K97. A coiled-coil region spans residues 105–130 (SASKEKTQGHIRELEEEVQLLKNLSH). Glycyl lysine isopeptide (Lys-Gly) (interchain with G-Cter in ubiquitin) cross-links involve residues K108 and K110. D196 (proton acceptor) is an active-site residue. Residues 573-608 (MPSPLKSSKRTLNTSRVMQSGTEPTQVNESTKKGVN) form a disordered region. Positions 582–608 (RTLNTSRVMQSGTEPTQVNESTKKGVN) are enriched in polar residues. Residues 618–641 (RKWEEELYEELERHRENLRHAGAG) adopt a coiled-coil conformation.

This sequence belongs to the protein kinase superfamily. STE Ser/Thr protein kinase family. MAP kinase kinase kinase subfamily. As to quaternary structure, interacts with NACK2 and MKK6. Expressed in roots and flowers.

It is found in the cytoplasm. It localises to the cytoskeleton. The enzyme catalyses L-seryl-[protein] + ATP = O-phospho-L-seryl-[protein] + ADP + H(+). It carries out the reaction L-threonyl-[protein] + ATP = O-phospho-L-threonyl-[protein] + ADP + H(+). In terms of biological role, involved in cortical microtubules organization and stabilization by regulating the phosphorylation state of microtubule-associated proteins such as MAP65-1. The polypeptide is Mitogen-activated protein kinase kinase kinase 3 (ANP3) (Arabidopsis thaliana (Mouse-ear cress)).